The following is a 134-amino-acid chain: Small ribosomal subunit protein uS8c (134 aa).

It belongs to the universal ribosomal protein uS8 family. Part of the 30S ribosomal subunit.

It is found in the plastid. Functionally, one of the primary rRNA binding proteins, it binds directly to 16S rRNA central domain where it helps coordinate assembly of the platform of the 30S subunit. In Cuscuta reflexa (Southern Asian dodder), this protein is Small ribosomal subunit protein uS8c (rps8).